A 373-amino-acid chain; its full sequence is MPAWSCLVTGAGGFLGQRIIRMLAQEKELQEVRTLFRSFTPKHREELSKLQTKTKVTVLEGDILDAQCLRRACQGISVVIHTAAAIDVFGAIPRQTVIDINLKGTQHLLDACIGARVPVFIYSSSVAVAGPNSYKVIIQNGSEEENHESTWSDPYAYSKKMAEKAVLAANGSTLKDGGTLHTCALRLPFIYGEKSKFISDTMDRALKNNGLINGFSRFSVISSVYVNNAAWAHVLAARGLQDPKKSPNIQGQFYYISDDTPHQSYDDLCYTLSKDWGLRPDSSWKPPVALLYWFGFLLETVSFLLRPVYNYQPPFNRHLVTLLNSVFTFSYKKAQRDLGYEPLVSWEEAREKTSEWIGSLVEQHKGTLNIKAQ.

NADP(+) contacts are provided by residues 10–15 (GAGGFL), Tyr155, and Lys159. The active-site Proton donor is Lys159. The chain crosses the membrane as a helical span at residues 288–308 (VALLYWFGFLLETVSFLLRPV).

The protein belongs to the 3-beta-HSD family. In terms of tissue distribution, high levels in adrenal gland, kidney and male liver (at protein level). Low levels in female liver (at protein level). Expressed in ovaries (at protein level).

Its subcellular location is the endoplasmic reticulum membrane. It localises to the mitochondrion membrane. It carries out the reaction a 3beta-hydroxysteroid + NADP(+) = a 3-oxosteroid + NADPH + H(+). The catalysed reaction is 5alpha-androstane-3beta,17beta-diol + NADP(+) = 17beta-hydroxy-5alpha-androstan-3-one + NADPH + H(+). It participates in steroid metabolism. Responsible for the reduction of the oxo group on the C-3 of 5alpha-androstane steroids. Catalyzes the conversion of dihydrotestosterone to its inactive form 5alpha-androstanediol, that does not bind androgen receptor/AR. Does not function as an isomerase. The sequence is that of NADPH-dependent 3-keto-steroid reductase HSD3B3 (HSD3B3) from Mesocricetus auratus (Golden hamster).